The sequence spans 447 residues: uncharacterized protein (447 aa).

One can recognise an FAD-binding PCMH-type domain in the interval 29–201; the sequence is VDVYPLVFVF…TQYTFKVHRA (173 aa).

Belongs to the oxygen-dependent FAD-linked oxidoreductase family. FAD serves as cofactor.

Its subcellular location is the spore coat. This is an uncharacterized protein from Bacillus subtilis (strain 168).